The primary structure comprises 600 residues: Aspartate--tRNA(Asp/Asn) ligase (600 aa).

E174 serves as a coordination point for L-aspartate. The aspartate stretch occupies residues 198–201 (QLFK). Residue R220 participates in L-aspartate binding. ATP is bound by residues 220-222 (RDE) and Q229. H457 provides a ligand contact to L-aspartate. E491 serves as a coordination point for ATP. Residue R498 coordinates L-aspartate. 543 to 546 (GLDR) is a binding site for ATP.

The protein belongs to the class-II aminoacyl-tRNA synthetase family. Type 1 subfamily. Homodimer.

It localises to the cytoplasm. It carries out the reaction tRNA(Asx) + L-aspartate + ATP = L-aspartyl-tRNA(Asx) + AMP + diphosphate. In terms of biological role, aspartyl-tRNA synthetase with relaxed tRNA specificity since it is able to aspartylate not only its cognate tRNA(Asp) but also tRNA(Asn). Reaction proceeds in two steps: L-aspartate is first activated by ATP to form Asp-AMP and then transferred to the acceptor end of tRNA(Asp/Asn). The protein is Aspartate--tRNA(Asp/Asn) ligase of Burkholderia cenocepacia (strain ATCC BAA-245 / DSM 16553 / LMG 16656 / NCTC 13227 / J2315 / CF5610) (Burkholderia cepacia (strain J2315)).